A 115-amino-acid polypeptide reads, in one-letter code: Regulator of ribonuclease activity B (115 aa).

This sequence belongs to the RraB family. As to quaternary structure, interacts with the C-terminal region of Rne.

The protein resides in the cytoplasm. Its function is as follows. Globally modulates RNA abundance by binding to RNase E (Rne) and regulating its endonucleolytic activity. Can modulate Rne action in a substrate-dependent manner by altering the composition of the degradosome. This Aeromonas hydrophila subsp. hydrophila (strain ATCC 7966 / DSM 30187 / BCRC 13018 / CCUG 14551 / JCM 1027 / KCTC 2358 / NCIMB 9240 / NCTC 8049) protein is Regulator of ribonuclease activity B.